The following is a 207-amino-acid chain: Phosphoenolpyruvate guanylyltransferase (207 aa).

Threonine 137, glycine 153, and serine 156 together coordinate phosphoenolpyruvate.

It belongs to the CofC family.

The enzyme catalyses phosphoenolpyruvate + GTP + H(+) = enolpyruvoyl-2-diphospho-5'-guanosine + diphosphate. Its pathway is cofactor biosynthesis; coenzyme F420 biosynthesis. In terms of biological role, guanylyltransferase that catalyzes the activation of phosphoenolpyruvate (PEP) as enolpyruvoyl-2-diphospho-5'-guanosine, via the condensation of PEP with GTP. It is involved in the biosynthesis of coenzyme F420, a hydride carrier cofactor. This chain is Phosphoenolpyruvate guanylyltransferase, found in Sphaerobacter thermophilus (strain ATCC 49802 / DSM 20745 / KCCM 41009 / NCIMB 13125 / S 6022).